The primary structure comprises 140 residues: Oocyte zinc finger protein XlCOF15 (140 aa).

C2H2-type zinc fingers lie at residues 6–28, 34–56, 62–84, 90–112, and 118–140; these read FTCKECSKSFSSNSHLSRHQKIH, FTCTECDKKFLTRSSLLLHQKVH, FICTECGKGFSAKSQLHRHHVIH, FTCAECGKTFSYKQSLVTHRAAH, and FICTECGKSFSHKNNLQTHLKSH.

This sequence belongs to the krueppel C2H2-type zinc-finger protein family.

It localises to the nucleus. In terms of biological role, may be involved in transcriptional regulation. In Xenopus laevis (African clawed frog), this protein is Oocyte zinc finger protein XlCOF15.